The following is a 20-amino-acid chain: Superoxide dismutase [Mn], mitochondrial (20 aa).

The protein belongs to the iron/manganese superoxide dismutase family. In terms of assembly, homotetramer. The cofactor is Mn(2+).

Its subcellular location is the mitochondrion matrix. It catalyses the reaction 2 superoxide + 2 H(+) = H2O2 + O2. In terms of biological role, destroys superoxide anion radicals which are normally produced within the cells and which are toxic to biological systems. This is Superoxide dismutase [Mn], mitochondrial (SODA) from Hordeum vulgare (Barley).